The primary structure comprises 483 residues: Pre-glycoprotein polyprotein GP complex (483 aa).

The N-myristoyl glycine; by host moiety is linked to residue Gly-2. Over 2 to 17 (GQFISFMQEIPIFLQE) the chain is Extracellular. Residues 18–32 (ALNIALVAVSLICIV) form a helical membrane-spanning segment. Residue Lys-33 is a topological domain, cytoplasmic. The helical transmembrane segment at 34-53 (GLVNLYRCGLFQLMVFLVLA) threads the bilayer. Extracellular-side segments run 54–58 (GRSCS) and 59–422 (EETF…TLVD). Residue Cys-57 participates in Zn(2+) binding. N-linked (GlcNAc...) asparagine; by host glycans are attached at residues Asn-83 and Asn-95. 6 disulfides stabilise this stretch: Cys-92–Cys-224, Cys-134–Cys-162, Cys-205–Cys-211, Cys-269–Cys-282, Cys-291–Cys-300, and Cys-354–Cys-375. Asn-164 and Asn-176 each carry an N-linked (GlcNAc...) asparagine; by host glycan. Asn-355, Asn-363, Asn-380, and Asn-385 each carry an N-linked (GlcNAc...) asparagine; by host glycan. The helical transmembrane segment at 423 to 443 (ICFWSTVFFTSTLFLHLIGFP) threads the bilayer. At 444-483 (THEHIRGEGCPLPHRLNSMGGCRCGKYLPLKKPTIWHRRH) the chain is on the cytoplasmic side. Positions 445, 447, 453, 457, 465, 467, and 483 each coordinate Zn(2+).

The protein belongs to the arenaviridae GPC protein family. Homotetramer; disulfide-linked. As to quaternary structure, homotetramer. GP2 homotetramers bind through ionic interactions with GP1 homotetramers to form the GP complex together with the stable signal peptide. The GP-C polyprotein interacts with the host protease MBTPS1/SKI-1 resulting in the polyprotein processing. In terms of processing, specific enzymatic cleavages in vivo yield mature proteins. GP-C polyprotein is cleaved in the endoplasmic reticulum by the host protease MBTPS1. Only cleaved glycoprotein is incorporated into virions. The SSP remains stably associated with the GP complex following cleavage by signal peptidase and plays crucial roles in the trafficking of GP through the secretory pathway. Post-translationally, myristoylation is necessary for GP2-mediated fusion activity.

It localises to the virion membrane. It is found in the host endoplasmic reticulum membrane. The protein localises to the host Golgi apparatus membrane. The protein resides in the host cell membrane. Functionally, class I viral fusion protein that directs fusion of viral and host endosomal membranes, leading to delivery of the nucleocapsid into the cytoplasm. Membrane fusion is mediated by irreversible conformational changes induced upon acidification in the endosome. In terms of biological role, stable signal peptide (SSP): cleaved and functions as a signal peptide. In addition, it is also retained as the third component of the GP complex. The SSP is required for efficient glycoprotein expression, post-translational maturation cleavage of GP1 and GP2, glycoprotein transport to the cell surface plasma membrane, formation of infectious virus particles, and acid pH-dependent glycoprotein-mediated cell fusion. Interacts with the host receptor. This chain is Pre-glycoprotein polyprotein GP complex, found in Artibeus (neotropical fruit bats).